The following is a 507-amino-acid chain: Phosphoprotein (507 aa).

A phosphoserine mark is found at S86 and S151. Residues 137–160 (DGVEVWGGDEESENSDVDSGEPDP) are compositionally biased toward acidic residues. The segment at 137–307 (DGVEVWGGDE…QSNIEPEDDY (171 aa)) is disordered. Composition is skewed to basic and acidic residues over residues 189 to 199 (EIQKLLEDQSR) and 222 to 233 (TASEKPIKKGTD). Low complexity-rich tracts occupy residues 236–252 (STSSGTMAESSSTGGAT) and 266–278 (NASAENALASASN). Residues 279-301 (VSPTQGSKTESGTTTSRISQSNI) are compositionally biased toward polar residues. The multimerization stretch occupies residues 304–376 (EDDYDDELFS…LSSVMIAIPG (73 aa)). The interaction with the nucleocapsid (N-RNA) stretch occupies residues 459–507 (ASRSVIRSIIKSSHLGEDRKDYLMSLLNDIQGSKDLAQFHQMLVKILKN).

This sequence belongs to the morbillivirus P protein family. As to quaternary structure, homotetramer. Interacts (via multimerization domain) with polymerase L; this interaction forms the polymerase L-P complex. Interacts (via N-terminus) with N0 (via Ncore); this interaction allows P to chaperon N0 to avoid N polymerization before encapsidation. Interacts (via C-terminus) with N-RNA template; this interaction positions the polymerase on the template for both transcription and replication. Post-translationally, phosphorylation on serines by host CK2 is necessary for the formation of viral factories.

Its function is as follows. Essential cofactor of the RNA polymerase L that plays a central role in the transcription and replication by forming the polymerase complex with RNA polymerase L and recruiting L to the genomic N-RNA template for RNA synthesis. Also plays a central role in the encapsidation of nascent RNA chains by forming the encapsidation complex with the nucleocapsid protein N (N-P complex). Acts as a chaperone for newly synthesized free N protein, so-called N0, allowing encapsidation of nascent RNA chains during replication. The nucleoprotein protein N prevents excessive phosphorylation of P, which leads to down-regulation of viral transcription/ replication. Participates, together with N, in the formation of viral factories (viroplasms), which are large inclusions in the host cytoplasm where replication takes place. The chain is Phosphoprotein (P/V) from Bos indicus (Zebu).